The chain runs to 428 residues: Adenylosuccinate synthetase (428 aa).

Residues 12-18 and 40-42 each bind GTP; these read GDEGKGK and GHT. Aspartate 13 functions as the Proton acceptor in the catalytic mechanism. Residues aspartate 13 and glycine 40 each contribute to the Mg(2+) site. IMP contacts are provided by residues 13–16, 38–41, threonine 128, arginine 142, glutamine 223, threonine 238, and arginine 302; these read DEGK and NAGH. Catalysis depends on histidine 41, which acts as the Proton donor. Substrate is bound at residue 298-304; sequence TTTGRPR. GTP is bound by residues arginine 304, 330 to 332, and 412 to 414; these read KLD and GVG.

Belongs to the adenylosuccinate synthetase family. Homodimer. Mg(2+) serves as cofactor.

The protein resides in the cytoplasm. The catalysed reaction is IMP + L-aspartate + GTP = N(6)-(1,2-dicarboxyethyl)-AMP + GDP + phosphate + 2 H(+). Its pathway is purine metabolism; AMP biosynthesis via de novo pathway; AMP from IMP: step 1/2. In terms of biological role, plays an important role in the de novo pathway of purine nucleotide biosynthesis. Catalyzes the first committed step in the biosynthesis of AMP from IMP. This Kineococcus radiotolerans (strain ATCC BAA-149 / DSM 14245 / SRS30216) protein is Adenylosuccinate synthetase.